The following is a 257-amino-acid chain: Ribosomal large subunit pseudouridine synthase B (257 aa).

Residues 3–63 (AKIQKILSDL…KKKIIVKRNK (61 aa)) form the S4 RNA-binding domain. Asp-109 (nucleophile) is an active-site residue.

It belongs to the pseudouridine synthase RsuA family.

The enzyme catalyses uridine(2605) in 23S rRNA = pseudouridine(2605) in 23S rRNA. Its function is as follows. Responsible for synthesis of pseudouridine from uracil-2605 in 23S ribosomal RNA. The sequence is that of Ribosomal large subunit pseudouridine synthase B (rluB) from Buchnera aphidicola subsp. Schizaphis graminum (strain Sg).